A 594-amino-acid polypeptide reads, in one-letter code: A-type ATP synthase subunit A (594 aa).

Position 236–243 (236–243 (GPFGSGKT)) interacts with ATP.

The protein belongs to the ATPase alpha/beta chains family. As to quaternary structure, has multiple subunits with at least A(3), B(3), C, D, E, F, H, I and proteolipid K(x).

It localises to the cell membrane. It carries out the reaction ATP + H2O + 4 H(+)(in) = ADP + phosphate + 5 H(+)(out). Functionally, component of the A-type ATP synthase that produces ATP from ADP in the presence of a proton gradient across the membrane. The A chain is the catalytic subunit. This Pyrobaculum calidifontis (strain DSM 21063 / JCM 11548 / VA1) protein is A-type ATP synthase subunit A.